The following is a 270-amino-acid chain: Checkpoint signal transducer rad25 (270 aa).

Ser-234 and Ser-253 each carry phosphoserine. The tract at residues 240 to 270 (QSAKEEAPAAAAASENEHPEPKESTTDTVKA) is disordered. Residues 254–270 (ENEHPEPKESTTDTVKA) show a composition bias toward basic and acidic residues.

This sequence belongs to the 14-3-3 family. In terms of assembly, interacts with rad24. Interacts with byr2.

The protein resides in the cytoplasm. In terms of biological role, acts in cell cycle and stress checkpoint signaling by sequestering signal transducers regulated by the checkpoints. Required for the DNA damage checkpoint that ensures that DNA damage is repaired before mitosis is attempted. Sequesters byr2 in the cytoplasm to prevent its translocation to the plasma membrane. This is Checkpoint signal transducer rad25 from Schizosaccharomyces pombe (strain 972 / ATCC 24843) (Fission yeast).